The chain runs to 288 residues: Type II restriction enzyme DpnII (288 aa).

Belongs to the DpnII type II restriction endonuclease family. In terms of assembly, homodimer.

The catalysed reaction is Endonucleolytic cleavage of DNA to give specific double-stranded fragments with terminal 5'-phosphates.. In terms of biological role, a P subtype restriction enzyme that recognizes the double-stranded unmethylated sequence 5'-GATC-3' and cleaves before G-1. This chain is Type II restriction enzyme DpnII, found in Streptococcus pneumoniae.